Here is a 356-residue protein sequence, read N- to C-terminus: HTH-type transcriptional regulator AglR (356 aa).

The HTH lacI-type domain occupies methionine 1 to threonine 57. The H-T-H motif DNA-binding region spans leucine 5 to asparagine 24. Residues threonine 337–alanine 356 are disordered.

Probable regulatory protein for the binding-protein-dependent transport system for alpha-glucosides such as sucrose, maltose and trehalose. The sequence is that of HTH-type transcriptional regulator AglR (aglR) from Rhizobium meliloti (strain 1021) (Ensifer meliloti).